We begin with the raw amino-acid sequence, 313 residues long: Ribosomal RNA small subunit methyltransferase H (313 aa).

S-adenosyl-L-methionine is bound by residues 35-37 (GGH), Asp-55, Phe-79, Asp-101, and Gln-108.

Belongs to the methyltransferase superfamily. RsmH family.

The protein localises to the cytoplasm. The catalysed reaction is cytidine(1402) in 16S rRNA + S-adenosyl-L-methionine = N(4)-methylcytidine(1402) in 16S rRNA + S-adenosyl-L-homocysteine + H(+). Functionally, specifically methylates the N4 position of cytidine in position 1402 (C1402) of 16S rRNA. This Escherichia coli O139:H28 (strain E24377A / ETEC) protein is Ribosomal RNA small subunit methyltransferase H.